We begin with the raw amino-acid sequence, 367 residues long: Peptide chain release factor 2 (367 aa).

An N5-methylglutamine modification is found at Gln-254.

It belongs to the prokaryotic/mitochondrial release factor family. In terms of processing, methylated by PrmC. Methylation increases the termination efficiency of RF2.

It localises to the cytoplasm. Functionally, peptide chain release factor 2 directs the termination of translation in response to the peptide chain termination codons UGA and UAA. The sequence is that of Peptide chain release factor 2 from Leptospira borgpetersenii serovar Hardjo-bovis (strain JB197).